The following is a 1151-amino-acid chain: Calcium-activated potassium channel subunit alpha-1 (1151 aa).

Positions 1-36 (MSSNIHANHLSLDASSSSSSSSSSSSSSSSSSSVHE) are disordered. Residues 1–59 (MSSNIHANHLSLDASSSSSSSSSSSSSSSSSSSVHEPKMDALIIPVTMEVPCDSRGQRM) lie on the Extracellular side of the membrane. A compositionally biased stretch (low complexity) spans 15–33 (SSSSSSSSSSSSSSSSSSS). The helical transmembrane segment at 60 to 80 (WWAFLASSMVTFFGGLFIILL) threads the bilayer. The Cytoplasmic portion of the chain corresponds to 81–151 (WRTLKYLWTV…MISAQTLTGR (71 aa)). S-palmitoyl cysteine attachment occurs at residues Cys-91, Cys-92, and Cys-94. A helical membrane pass occupies residues 152–172 (VLVVLVFALSIGALVIYFIDS). At 173–187 (SNPIESCQNFYKDFT) the chain is on the extracellular side. A helical membrane pass occupies residues 188-208 (LQIDMAFNVFFLLYFGLRFIA). The Cytoplasmic portion of the chain corresponds to 209–212 (ANDK). The chain crosses the membrane as a helical span at residues 213-233 (LWFWLEVNSVVDFFTVPPVFV). Residues 234–237 (SVYL) lie on the Extracellular side of the membrane. The chain crosses the membrane as a helical; Voltage-sensor span at residues 238–258 (NRSWLGLRFLRALRLIQFSEI). Residues 259-273 (LQFLNILKTSNSIKL) lie on the Cytoplasmic side of the membrane. The chain crosses the membrane as a helical span at residues 274–294 (VNLLSIFISTWLTAAGFIHLV). Residues 295–308 (ENSGDPWENFQNNQ) lie on the Extracellular side of the membrane. An intramembrane region (pore-forming) is located at residues 309 to 331 (ALTYWECVYLLMVTMSTVGYGDV). The Selectivity for potassium signature appears at 325–328 (TVGY). Residues 332 to 340 (YAKTTLGRL) are Extracellular-facing. Residues 341–361 (FMVFFILGGLAMFASYVPEII) traverse the membrane as a helical segment. Topologically, residues 362–1151 (ELIGNRKKYG…KQKYVQEERL (790 aa)) are cytoplasmic. The 143-residue stretch at 380 to 522 (RKHIVVCGHI…WNWKEGDDAI (143 aa)) folds into the RCK N-terminal 1 domain. Mg(2+) is bound by residues Glu-412, Gln-435, and Glu-437. A segment S7 region spans residues 529 to 549 (LGFIAQSCLAQGLSTMLANLF). Positions 586–606 (LSFPTVCELCFVKLKLLMIAI) are segment S8. The tract at residues 650 to 654 (CKACH) is heme-binding motif. A disordered region spans residues 674-702 (EQPSTLSPKKKQRNGGMRNSPNSSPKLMR). At Thr-678 the chain carries Phosphothreonine. Residues Ser-680, Ser-693, and Ser-697 each carry the phosphoserine modification. The tract at residues 752 to 772 (VLSGHVVVCIFGDVSSALIGL) is segment S9. The RCK N-terminal 2 domain occupies 754–898 (SGHVVVCIFG…MDRSSPDNSP (145 aa)). At Thr-885 the chain carries Phosphothreonine. A phosphoserine mark is found at Ser-893 and Ser-897. Residues 918–940 (TELVNDTNVQFLDQDDDDDPDTE) carry the Calcium bowl motif. Ca(2+)-binding residues include Gln-927, Asp-930, Asp-933, and Asp-935. The segment at 947-967 (FACGTAFAVSVLDSLMSATYF) is segment S10. The segment covering 1101 to 1126 (RASLSHSSHSSQSSSKKSSSVHSIPS) has biased composition (low complexity). A disordered region spans residues 1101-1151 (RASLSHSSHSSQSSSKKSSSVHSIPSTANRQNRPKSRESRDKQKYVQEERL). Positions 1135-1151 (KSRESRDKQKYVQEERL) are enriched in basic and acidic residues. Residues Ser-1136 and Ser-1139 each carry the phosphoserine modification.

This sequence belongs to the potassium channel family. Calcium-activated (TC 1.A.1.3) subfamily. KCa1.1/KCNMA1 sub-subfamily. In terms of assembly, homotetramer; which constitutes the calcium-activated potassium channel. Interacts with beta subunits KCNMB1, KCNMB2, KCNMB3 and KCNMB4. Interacts with gamma subunits LRRC26, LRRC38, LRRC52 and LRRC55. Beta and gamma subunits are accessory, and modulate its activity. Interacts with RAB11B. Phosphorylated. Phosphorylation by kinases such as PKA and/or PKG. In smooth muscles, phosphorylation affects its activity. In terms of processing, palmitoylation by ZDHHC22 and ZDHHC23 within the intracellular linker between the S0 and S1 transmembrane domains regulates localization to the plasma membrane. Depalmitoylated by LYPLA1 and LYPLAL1, leading to retard exit from the trans-Golgi network.

The protein resides in the cell membrane. The enzyme catalyses K(+)(in) = K(+)(out). Ethanol and carbon monoxide-bound heme increase channel activation. Heme inhibits channel activation. Its function is as follows. Potassium channel activated by both membrane depolarization or increase in cytosolic Ca(2+) that mediates export of K(+). It is also activated by the concentration of cytosolic Mg(2+). Its activation dampens the excitatory events that elevate the cytosolic Ca(2+) concentration and/or depolarize the cell membrane. It therefore contributes to repolarization of the membrane potential. Plays a key role in controlling excitability in a number of systems, such as regulation of the contraction of smooth muscle, the tuning of hair cells in the cochlea, regulation of transmitter release, and innate immunity. In smooth muscles, its activation by high level of Ca(2+), caused by ryanodine receptors in the sarcoplasmic reticulum, regulates the membrane potential. In cochlea cells, its number and kinetic properties partly determine the characteristic frequency of each hair cell and thereby helps to establish a tonotopic map. Kinetics of KCNMA1 channels are determined by alternative splicing, phosphorylation status and its combination with modulating beta subunits. Highly sensitive to both iberiotoxin (IbTx) and charybdotoxin (CTX). The protein is Calcium-activated potassium channel subunit alpha-1 (KCNMA1) of Macaca mulatta (Rhesus macaque).